The sequence spans 438 residues: UPF0597 protein YE0448 (438 aa).

It belongs to the UPF0597 family.

The sequence is that of UPF0597 protein YE0448 from Yersinia enterocolitica serotype O:8 / biotype 1B (strain NCTC 13174 / 8081).